A 536-amino-acid chain; its full sequence is L-ornithine N(5)-monooxygenase SIDA (536 aa).

Residues 1 to 25 (MSPHRETTGDESTTTTVPQNGTNGA) are disordered. FAD contacts are provided by residues 115 to 123 (EKQTRFAWH) and Gln134. Position 139 (Lys139) interacts with L-ornithine. Residue Val200 coordinates FAD. Arg310 is a binding site for NADP(+). L-ornithine is bound by residues 324–327 (NSIF) and Asn354. FAD is bound at residue 515–517 (TLL). Ser518 provides a ligand contact to L-ornithine.

It belongs to the lysine N(6)-hydroxylase/L-ornithine N(5)-oxygenase family. As to quaternary structure, homotetramer. FAD serves as cofactor.

It carries out the reaction L-ornithine + NADH + O2 = N(5)-hydroxy-L-ornithine + NAD(+) + H2O. The enzyme catalyses L-ornithine + NADPH + O2 = N(5)-hydroxy-L-ornithine + NADP(+) + H2O. It participates in siderophore biosynthesis. L-ornithine N(5)-monooxygenase; part of the gene cluster that mediates the biosynthesis of at least 11 siderophores, including beauverichelin A, dimerumic acid (DA), Na-dimethyl coprogen (NADC), eleutherazine B, ferricrocin (FC), fusarinine A, fusarinine C (FsC), metachelin A, mevalonolactone, rhodotorulic acid (RA) and tenellin. This cocktail of siderophores for iron metabolism is essential for virulence, and more specifically for the fungal virulence in penetrating through the host cuticle. Siderophore synthesis is also involved in conidial germination under iron-deficient conditions. SIDA initiates the biosynthesis of these siderophores with the enzymatic hydroxylation of ornithine. SIDA is indispensable for the production of most siderophores including fusarinine C and ferricrocin but not mevalonolactone and eleutherazine B. However, SIDA mediates the metabolic interplay between synthesis of mevalonolactone and eleutherazine B and other siderophores. This is L-ornithine N(5)-monooxygenase SIDA from Beauveria bassiana (strain ARSEF 2860) (White muscardine disease fungus).